The sequence spans 604 residues: Baculoviral IAP repeat-containing protein 3 (604 aa).

BIR repeat units follow at residues 29-96, 169-235, and 255-322; these read ELYR…CRFV, ENAR…CPFI, and HAAR…CEYL. Zn(2+) contacts are provided by cysteine 292, cysteine 295, histidine 312, and cysteine 319. The CARD domain occupies 439 to 529; that stretch reads KESNDLLLIR…VLYEHLFVQQ (91 aa). The RING-type zinc-finger motif lies at 557–592; sequence CKVCMDKEVSIVFIPCGHLVVCKDCAPSLRKCPICR.

It belongs to the IAP family. In terms of assembly, interacts with PRSS25; interaction inhibits apoptotic suppressor activity. The BIR motifs region interacts with TNF receptor associated factors 1 and 2 (TRAF1 and TRAF2) to form a heteromeric complex, which is then recruited to the tumor necrosis factor receptor 2 (TNFR2). Interaction with TRAF2 is required for ubiquitination of IKBKE, degradation of NFKBIA and activation of NF-kappa-B. Interacts with RIP1, RIP2, RIP3, RIP4 and USP19. Post-translationally, auto-ubiquitinated and degraded by the proteasome in apoptotic cells. As to expression, highly expressed in fetal lung, and kidney. In the adult, expression is mainly seen in lymphoid tissues, including spleen, thymus and peripheral blood lymphocytes.

It localises to the cytoplasm. It is found in the nucleus. The catalysed reaction is S-ubiquitinyl-[E2 ubiquitin-conjugating enzyme]-L-cysteine + [acceptor protein]-L-lysine = [E2 ubiquitin-conjugating enzyme]-L-cysteine + N(6)-ubiquitinyl-[acceptor protein]-L-lysine.. USP19 regulates the stability of BIRC3/c-IAP2 by preventing its ubiquitination. Multi-functional protein which regulates not only caspases and apoptosis, but also modulates inflammatory signaling and immunity, mitogenic kinase signaling and cell proliferation, as well as cell invasion and metastasis. Acts as an E3 ubiquitin-protein ligase regulating NF-kappa-B signaling and regulates both canonical and non-canonical NF-kappa-B signaling by acting in opposite directions: acts as a positive regulator of the canonical pathway and suppresses constitutive activation of non-canonical NF-kappa-B signaling. The target proteins for its E3 ubiquitin-protein ligase activity include: RIPK1, RIPK2, RIPK3, RIPK4, CASP3, CASP7, CASP8, IKBKE, TRAF1, and BCL10. Acts as an important regulator of innate immune signaling via regulation of Toll-like receptors (TLRs), Nodlike receptors (NLRs) and RIG-I like receptors (RLRs), collectively referred to as pattern recognition receptors (PRRs). Protects cells from spontaneous formation of the ripoptosome, a large multi-protein complex that has the capability to kill cancer cells in a caspase-dependent and caspase-independent manner. Suppresses ripoptosome formation by ubiquitinating RIPK1 and CASP8. This Homo sapiens (Human) protein is Baculoviral IAP repeat-containing protein 3 (BIRC3).